The chain runs to 127 residues: Membrane-bound lysozyme inhibitor of C-type lysozyme (127 aa).

Residues 1 to 18 (MKKALWLLLAAVPVVLVA) form the signal peptide. Residue Cys-19 is the site of N-palmitoyl cysteine attachment. A lipid anchor (S-diacylglycerol cysteine) is attached at Cys-19. Cys-51 and Cys-124 are oxidised to a cystine.

Belongs to the MliC family. Type 2 subfamily. In terms of assembly, homodimer.

It localises to the cell outer membrane. In terms of biological role, specifically inhibits C-type lysozymes. In Pseudomonas aeruginosa (strain ATCC 15692 / DSM 22644 / CIP 104116 / JCM 14847 / LMG 12228 / 1C / PRS 101 / PAO1), this protein is Membrane-bound lysozyme inhibitor of C-type lysozyme.